Consider the following 103-residue polypeptide: Histone H4 (103 aa).

Positions 1–14 are enriched in gly residues; that stretch reads MSGRGKGGKGLGKG. The segment at 1–20 is disordered; that stretch reads MSGRGKGGKGLGKGGAKRHR. At S2 the chain carries N-acetylserine. An N6-acetyl-N6-methyllysine; alternate mark is found at K6 and K13. At K17 the chain carries N6-acetyllysine. The DNA-binding element occupies 17 to 21; sequence KRHRK. At K21 the chain carries N6-methyllysine.

This sequence belongs to the histone H4 family. The nucleosome is a histone octamer containing two molecules each of H2A, H2B, H3 and H4 assembled in one H3-H4 heterotetramer and two H2A-H2B heterodimers. The octamer wraps approximately 147 bp of DNA.

The protein resides in the nucleus. The protein localises to the chromosome. Functionally, core component of nucleosome. Nucleosomes wrap and compact DNA into chromatin, limiting DNA accessibility to the cellular machineries which require DNA as a template. Histones thereby play a central role in transcription regulation, DNA repair, DNA replication and chromosomal stability. DNA accessibility is regulated via a complex set of post-translational modifications of histones, also called histone code, and nucleosome remodeling. The protein is Histone H4 of Holothuria tubulosa (Tubular sea cucumber).